Consider the following 61-residue polypeptide: Alpha-conotoxin-like Lp1.6a (61 aa).

An N-terminal signal peptide occupies residues Met1–Ser21. A propeptide spanning residues Phe22–Arg44 is cleaved from the precursor. The residue at position 45 (Gln45) is a Pyrrolidone carboxylic acid. 2 cysteine pairs are disulfide-bonded: Cys47–Cys53 and Cys48–Cys60. Cys60 bears the Cysteine amide mark.

It belongs to the conotoxin A superfamily. In terms of tissue distribution, expressed by the venom duct.

Its subcellular location is the secreted. Alpha-conotoxins act on postsynaptic membranes, they bind to the nicotinic acetylcholine receptors (nAChR) and thus inhibit them. The polypeptide is Alpha-conotoxin-like Lp1.6a (Conus leopardus (Leopard cone)).